A 262-amino-acid polypeptide reads, in one-letter code: Acyl-[acyl-carrier-protein]--UDP-N-acetylglucosamine O-acyltransferase (262 aa).

It belongs to the transferase hexapeptide repeat family. LpxA subfamily. As to quaternary structure, homotrimer.

Its subcellular location is the cytoplasm. It catalyses the reaction a (3R)-hydroxyacyl-[ACP] + UDP-N-acetyl-alpha-D-glucosamine = a UDP-3-O-[(3R)-3-hydroxyacyl]-N-acetyl-alpha-D-glucosamine + holo-[ACP]. It participates in glycolipid biosynthesis; lipid IV(A) biosynthesis; lipid IV(A) from (3R)-3-hydroxytetradecanoyl-[acyl-carrier-protein] and UDP-N-acetyl-alpha-D-glucosamine: step 1/6. In terms of biological role, involved in the biosynthesis of lipid A, a phosphorylated glycolipid that anchors the lipopolysaccharide to the outer membrane of the cell. The chain is Acyl-[acyl-carrier-protein]--UDP-N-acetylglucosamine O-acyltransferase from Yersinia enterocolitica serotype O:8 / biotype 1B (strain NCTC 13174 / 8081).